Here is a 1118-residue protein sequence, read N- to C-terminus: DNA mismatch repair protein MSH1, mitochondrial (1118 aa).

768 to 775 (GPNGGGKS) provides a ligand contact to ATP.

The protein belongs to the DNA mismatch repair MutS family.

The protein resides in the mitochondrion. It is found in the plastid. It localises to the chloroplast. DNA mismatch repair protein specifically involved in maintenance of mitochondrial genome configuration by controlling specific rearranged portion. Functions by suppressing asymmetric recombination at some repeat pairs. This Arabidopsis thaliana (Mouse-ear cress) protein is DNA mismatch repair protein MSH1, mitochondrial (MSH1).